We begin with the raw amino-acid sequence, 165 residues long: Cyclic pyranopterin monophosphate synthase (165 aa).

Substrate-binding positions include 75–77 and 115–116; these read MCH and ME. Asp130 is a catalytic residue.

The protein belongs to the MoaC family. As to quaternary structure, homohexamer; trimer of dimers.

It catalyses the reaction (8S)-3',8-cyclo-7,8-dihydroguanosine 5'-triphosphate = cyclic pyranopterin phosphate + diphosphate. It participates in cofactor biosynthesis; molybdopterin biosynthesis. In terms of biological role, catalyzes the conversion of (8S)-3',8-cyclo-7,8-dihydroguanosine 5'-triphosphate to cyclic pyranopterin monophosphate (cPMP). The sequence is that of Cyclic pyranopterin monophosphate synthase from Halalkalibacterium halodurans (strain ATCC BAA-125 / DSM 18197 / FERM 7344 / JCM 9153 / C-125) (Bacillus halodurans).